The chain runs to 132 residues: Small ribosomal subunit protein uS8 (132 aa).

It belongs to the universal ribosomal protein uS8 family. As to quaternary structure, part of the 30S ribosomal subunit. Contacts proteins S5 and S12.

In terms of biological role, one of the primary rRNA binding proteins, it binds directly to 16S rRNA central domain where it helps coordinate assembly of the platform of the 30S subunit. The protein is Small ribosomal subunit protein uS8 of Xanthomonas oryzae pv. oryzae (strain MAFF 311018).